A 473-amino-acid chain; its full sequence is Dol-P-Glc:Glc(2)Man(9)GlcNAc(2)-PP-Dol alpha-1,2-glucosyltransferase (473 aa).

The Cytoplasmic segment spans residues M1–G6. A helical transmembrane segment spans residues Y7–F27. Topologically, residues S28 to T64 are extracellular. A helical transmembrane segment spans residues L65–W85. Over S86–R97 the chain is Cytoplasmic. A helical membrane pass occupies residues F98–V118. Residues Q119 to R130 lie on the Extracellular side of the membrane. 2 helical membrane-spanning segments follow: residues V131–Y151 and T152–H172. At K173 to S175 the chain is on the extracellular side. Residues A176–C196 form a helical membrane-spanning segment. Residues A197–M249 lie on the Cytoplasmic side of the membrane. A helical transmembrane segment spans residues L250–V270. Over N271–E283 the chain is Extracellular. Residues A284–P304 form a helical membrane-spanning segment. Residues H305–R323 are Cytoplasmic-facing. Residues I324–H344 traverse the membrane as a helical segment. The Extracellular segment spans residues K345–E367. Residues T368–L388 traverse the membrane as a helical segment. Residues K389–S392 are Cytoplasmic-facing. The helical transmembrane segment at I393–L413 threads the bilayer. At E414–R436 the chain is on the extracellular side. A helical membrane pass occupies residues L437–N457. Over K458–W473 the chain is Cytoplasmic.

This sequence belongs to the ALG10 glucosyltransferase family.

The protein resides in the endoplasmic reticulum membrane. It catalyses the reaction an alpha-D-Glc-(1-&gt;3)-alpha-D-Glc-(1-&gt;3)-alpha-D-Man-(1-&gt;2)-alpha-D-Man-(1-&gt;2)-alpha-D-Man-(1-&gt;3)-[alpha-D-Man-(1-&gt;2)-alpha-D-Man-(1-&gt;3)-[alpha-D-Man-(1-&gt;2)-alpha-D-Man-(1-&gt;6)]-alpha-D-Man-(1-&gt;6)]-beta-D-Man-(1-&gt;4)-beta-D-GlcNAc-(1-&gt;4)-alpha-D-GlcNAc-diphospho-di-trans,poly-cis-dolichol + a di-trans,poly-cis-dolichyl beta-D-glucosyl phosphate = a alpha-D-Glc-(1-&gt;2)-alpha-D-Glc-(1-&gt;3)-alpha-D-Glc-(1-&gt;3)-alpha-D-Man-(1-&gt;2)-alpha-D-Man-(1-&gt;2)-alpha-D-Man-(1-&gt;3)-[alpha-D-Man-(1-&gt;2)-alpha-D-Man-(1-&gt;3)-[alpha-D-Man-(1-&gt;2)-alpha-D-Man-(1-&gt;6)]-alpha-D-Man-(1-&gt;6)]-beta-D-Man-(1-&gt;4)-beta-D-GlcNAc-(1-&gt;4)-alpha-D-GlcNAc-diphospho-di-trans,poly-cis-dolichol + a di-trans,poly-cis-dolichyl phosphate + H(+). Its pathway is protein modification; protein glycosylation. Dol-P-Glc:Glc(2)Man(9)GlcNAc(2)-PP-Dol alpha-1,2-glucosyltransferase that operates in the biosynthetic pathway of dolichol-linked oligosaccharides, the glycan precursors employed in protein asparagine (N)-glycosylation. The assembly of dolichol-linked oligosaccharides begins on the cytosolic side of the endoplasmic reticulum membrane and finishes in its lumen. The sequential addition of sugars to dolichol pyrophosphate produces dolichol-linked oligosaccharides containing fourteen sugars, including two GlcNAcs, nine mannoses and three glucoses. Once assembled, the oligosaccharide is transferred from the lipid to nascent proteins by oligosaccharyltransferases. In the lumen of the endoplasmic reticulum, adds the third and last glucose residue from dolichyl phosphate glucose (Dol-P-Glc) onto the lipid-linked oligosaccharide intermediate Glc(2)Man(9)GlcNAc(2)-PP-Dol to produce Glc(3)Man(9)GlcNAc(2)-PP-Dol. The sequence is that of Dol-P-Glc:Glc(2)Man(9)GlcNAc(2)-PP-Dol alpha-1,2-glucosyltransferase from Homo sapiens (Human).